The following is a 446-amino-acid chain: Glutamate--tRNA ligase 2 (446 aa).

The 'HIGH' region motif lies at 8–18; sequence PSPTGYLHIGN. The short motif at 239-243 is the 'KMSKS' region element; that stretch reads GLSKR. Lys-242 provides a ligand contact to ATP.

Belongs to the class-I aminoacyl-tRNA synthetase family. Glutamate--tRNA ligase type 1 subfamily. Monomer.

It is found in the cytoplasm. It catalyses the reaction tRNA(Glu) + L-glutamate + ATP = L-glutamyl-tRNA(Glu) + AMP + diphosphate. Its function is as follows. Catalyzes the attachment of glutamate to tRNA(Glu) in a two-step reaction: glutamate is first activated by ATP to form Glu-AMP and then transferred to the acceptor end of tRNA(Glu). The protein is Glutamate--tRNA ligase 2 of Methylobacterium radiotolerans (strain ATCC 27329 / DSM 1819 / JCM 2831 / NBRC 15690 / NCIMB 10815 / 0-1).